The sequence spans 432 residues: Adenylosuccinate synthetase (432 aa).

GTP is bound by residues 13-19 and 41-43; these read GDEGKGK and GHT. The active-site Proton acceptor is the Asp-14. The Mg(2+) site is built by Asp-14 and Gly-41. Residues 14–17, 39–42, Thr-130, Arg-144, Gln-225, Thr-240, and Arg-304 contribute to the IMP site; these read DEGK and NAGH. The active-site Proton donor is the His-42. 300 to 306 provides a ligand contact to substrate; the sequence is AVTGRPR. Residues Arg-306, 332–334, and 415–417 contribute to the GTP site; these read KLD and STG.

This sequence belongs to the adenylosuccinate synthetase family. Homodimer. Mg(2+) is required as a cofactor.

The protein resides in the cytoplasm. The enzyme catalyses IMP + L-aspartate + GTP = N(6)-(1,2-dicarboxyethyl)-AMP + GDP + phosphate + 2 H(+). The protein operates within purine metabolism; AMP biosynthesis via de novo pathway; AMP from IMP: step 1/2. Plays an important role in the de novo pathway of purine nucleotide biosynthesis. Catalyzes the first committed step in the biosynthesis of AMP from IMP. In Pasteurella multocida (strain Pm70), this protein is Adenylosuccinate synthetase.